A 170-amino-acid chain; its full sequence is Ureidoglycolate lyase (170 aa).

This sequence belongs to the ureidoglycolate lyase family. Homodimer. Ni(2+) is required as a cofactor.

The enzyme catalyses (S)-ureidoglycolate = urea + glyoxylate. Its pathway is nitrogen metabolism; (S)-allantoin degradation. Functionally, catalyzes the catabolism of the allantoin degradation intermediate (S)-ureidoglycolate, generating urea and glyoxylate. Involved in the utilization of allantoin as nitrogen source. The sequence is that of Ureidoglycolate lyase from Stutzerimonas stutzeri (strain A1501) (Pseudomonas stutzeri).